A 1377-amino-acid chain; its full sequence is Zinc finger MYM-type protein 2 (1377 aa).

Residues Lys48, Lys88, Lys98, and Lys104 each participate in a glycyl lysine isopeptide (Lys-Gly) (interchain with G-Cter in SUMO2) cross-link. Polar residues-rich tracts occupy residues 85–115 (TSSKNEELQGNDSKITPSSKELASQKGSVSE) and 127–138 (TNQGQEKNSSNF). The interval 85 to 177 (TSSKNEELQG…GMGNSGITTE (93 aa)) is disordered. Over residues 139–152 (IERRPPETKNRTND) the composition is skewed to basic and acidic residues. A Glycyl lysine isopeptide (Lys-Gly) (interchain with G-Cter in SUMO2) cross-link involves residue Lys147. Residues 153-164 (VDFSTSSFSRSK) show a composition bias toward polar residues. At Ser159 the chain carries Phosphoserine. Residues Lys253 and Lys297 each participate in a glycyl lysine isopeptide (Lys-Gly) (interchain with G-Cter in SUMO2) cross-link. The disordered stretch occupies residues 273–305 (NGESATHHNPDSWISQSASFPRNQKQPGVDSLS). A compositionally biased stretch (polar residues) spans 284–298 (SWISQSASFPRNQKQ). The residue at position 305 (Ser305) is a Phosphoserine. Residues Lys312, Lys325, Lys348, and Lys366 each participate in a glycyl lysine isopeptide (Lys-Gly) (interchain with G-Cter in SUMO2) cross-link. The MYM-type 1 zinc-finger motif lies at 327–363 (VKVTCANCKKPLQKGQTAYQRKGSAHLFCSTTCLSSF). An MYM-type 2 zinc finger spans residues 369-409 (PKKLCVMCKKDITTMKGTIVAQVDSSESFQEFCSTSCLSLY). Residues Lys417, Lys441, Lys491, Lys503, Lys513, Lys529, and Lys532 each participate in a glycyl lysine isopeptide (Lys-Gly) (interchain with G-Cter in SUMO2) cross-link. 2 consecutive MYM-type zinc fingers follow at residues 421–456 (NKSRCTICGKLTEIRHEVSFKNMTHKLCSDHCFNRY) and 463–502 (IMNCCEQCGEYLPSKGAGNNVLVIDGQQKRFCCQSCVSEY). Residues 533 to 570 (LTTCTGCRTQCRFFDMTQCIGPNGYMEPYCSTACMNSH) form an MYM-type 5 zinc finger. Glycyl lysine isopeptide (Lys-Gly) (interchain with G-Cter in SUMO2) cross-links involve residues Lys576, Lys603, Lys649, Lys658, Lys688, Lys700, and Lys709. The MYM-type 6 zinc finger occupies 636–671 (QLKCNYCKNSFCSKPEILEWENKVHQFCSKTCSDDY). MYM-type zinc fingers lie at residues 723 to 758 (RCVTCNYCSQLCKKGATKELDGVVRDFCSEDCCKKF) and 764 to 799 (KAARCDCCKSQGTLKERVQWRGEMKHFCDQHCLLRF). Glycyl lysine isopeptide (Lys-Gly) (interchain with G-Cter in SUMO2) cross-links involve residues Lys764, Lys788, Lys812, and Lys829. Phosphoserine is present on residues Ser838 and Ser958. Disordered regions lie at residues 983–1002 (LLKNSDPETQSSMPDVPYEP) and 1028–1064 (VFGEEYEEQPRPRSKKKGAKRKAVSGYQSHDDSSDNS). The segment covering 1039–1050 (PRSKKKGAKRKA) has biased composition (basic residues). Ser1064 bears the Phosphoserine mark. A Phosphothreonine modification is found at Thr1376.

May be a component of a BHC histone deacetylase complex that contains HDAC1, HDAC2, HMG20B/BRAF35, KDM1A, RCOR1/CoREST, PHF21A/BHC80, ZNF198, ZNF217, ZMYM3, GSE1 and GTF2I.

It localises to the nucleus. May function as a transcription factor. In Pongo abelii (Sumatran orangutan), this protein is Zinc finger MYM-type protein 2 (ZMYM2).